We begin with the raw amino-acid sequence, 697 residues long: Glycine--tRNA ligase beta subunit (697 aa).

It belongs to the class-II aminoacyl-tRNA synthetase family. Tetramer of two alpha and two beta subunits.

It is found in the cytoplasm. The enzyme catalyses tRNA(Gly) + glycine + ATP = glycyl-tRNA(Gly) + AMP + diphosphate. The protein is Glycine--tRNA ligase beta subunit of Cereibacter sphaeroides (strain ATCC 17029 / ATH 2.4.9) (Rhodobacter sphaeroides).